We begin with the raw amino-acid sequence, 960 residues long: ATPase 4, plasma membrane-type (960 aa).

Residues 1-69 (MTTTVEDNRE…EKKESKFLKF (69 aa)) lie on the Cytoplasmic side of the membrane. A helical membrane pass occupies residues 70-89 (LGFMWNPLSWVMEAAAIMAI). Residues 90–101 (ALANGGGKPPDW) are Extracellular-facing. Residues 102–122 (QDFVGIITLLVINSTISFIEE) traverse the membrane as a helical segment. Topologically, residues 123 to 251 (NNAGNAAAAL…GHFQQVLTAI (129 aa)) are cytoplasmic. The helical transmembrane segment at 252–272 (GNFCICSIAVGMLIEIVVMYP) threads the bilayer. The Extracellular segment spans residues 273–281 (IQHRAYRPG). A helical transmembrane segment spans residues 282–299 (IDNLLVLLIGGIPIAMPT). Residues 300–651 (VLSVTMAIGS…TSRAIFQRMK (352 aa)) lie on the Cytoplasmic side of the membrane. Asp-337 acts as the 4-aspartylphosphate intermediate in catalysis. Mg(2+) is bound by residues Asp-596 and Asp-600. A helical transmembrane segment spans residues 652–673 (NYTIYAVSITIRIVLGFMLLAL). The Extracellular segment spans residues 674–678 (IWQFD). Residues 679-701 (FPPFMVLIIAILNDGTIMTISKD) form a helical membrane-spanning segment. Topologically, residues 702–717 (RVKPSPLPDSWKLSEI) are cytoplasmic. The chain crosses the membrane as a helical span at residues 718 to 738 (FATGVVFGSYMAMMTVIFFWV). Topologically, residues 739–763 (SYKTDFFPRTFGVATLEKTAHDDFR) are extracellular. The chain crosses the membrane as a helical span at residues 764–784 (KLASAIYLQVSIISQALIFVT). The Cytoplasmic segment spans residues 785 to 796 (RSRSWSFVERPG). A helical transmembrane segment spans residues 797 to 817 (IFLMIAFILAQLVATLIAVYA). Residues 818 to 825 (NWSFAAIE) lie on the Extracellular side of the membrane. The helical transmembrane segment at 826–846 (GIGWGWAGVIWLYNIIFYIPL) threads the bilayer. At 847-960 (DFIKFFIRYA…IETIQQAYTV (114 aa)) the chain is on the cytoplasmic side. At Thr-893 the chain carries Phosphothreonine. Ser-942 carries the phosphoserine modification. An interaction with 14-3-3 proteins region spans residues 958-960 (YTV). Residue Thr-959 is modified to Phosphothreonine.

The protein belongs to the cation transport ATPase (P-type) (TC 3.A.3) family. Type IIIA subfamily. As to quaternary structure, binds to 14-3-3 proteins. The binding is induced by phosphorylation of Thr-959. Binding to 14-3-3 proteins activates the H(+)-ATPase. In terms of tissue distribution, expressed in guard cells and roots.

The protein localises to the cell membrane. It carries out the reaction ATP + H2O + H(+)(in) = ADP + phosphate + 2 H(+)(out). In terms of biological role, the plasma membrane H(+) ATPase of plants and fungi generates a proton gradient that drives the active transport of nutrients by H(+)-symport. The resulting external acidification and/or internal alkinization may mediate growth responses. In Arabidopsis thaliana (Mouse-ear cress), this protein is ATPase 4, plasma membrane-type (AHA4).